The chain runs to 92 residues: MGIFDWKHWIVILVVVVLVFGTKKLKNLGTDVGESIKGFRKAMNDDEKPADPVVNPVPPAQPVHPQATQPITERRTFDVQAEKVEEPTRKDS.

The chain crosses the membrane as a helical span at residues 1–21 (MGIFDWKHWIVILVVVVLVFG). The interval 44–92 (NDDEKPADPVVNPVPPAQPVHPQATQPITERRTFDVQAEKVEEPTRKDS) is disordered. Residues 72–92 (TERRTFDVQAEKVEEPTRKDS) are compositionally biased toward basic and acidic residues.

This sequence belongs to the TatA/E family. As to quaternary structure, the Tat system comprises two distinct complexes: a TatABC complex, containing multiple copies of TatA, TatB and TatC subunits, and a separate TatA complex, containing only TatA subunits. Substrates initially bind to the TatABC complex, which probably triggers association of the separate TatA complex to form the active translocon.

It is found in the cell inner membrane. In terms of biological role, part of the twin-arginine translocation (Tat) system that transports large folded proteins containing a characteristic twin-arginine motif in their signal peptide across membranes. TatA could form the protein-conducting channel of the Tat system. This Pseudomonas fluorescens (strain SBW25) protein is Sec-independent protein translocase protein TatA.